The following is a 212-amino-acid chain: uncharacterized protein (212 aa).

Positions 1-20 are cleaved as a signal peptide; sequence MRRVLLCFLTLILLLPAASA.

This is an uncharacterized protein from Archaeoglobus fulgidus (strain ATCC 49558 / DSM 4304 / JCM 9628 / NBRC 100126 / VC-16).